The sequence spans 261 residues: Cell division protein B (261 aa).

Residues 213 to 261 form a winged-helix-like fold region; sequence SEDMILNYIKTTGGFIDVDYIAKNFDVSKDEVFNVLRRLEEKGLIVLEG.

In terms of assembly, interacts with CdvA. Interacts with CdvC.

It localises to the cytoplasm. Its subcellular location is the nucleoid. In terms of biological role, part of a cell division machinery. The CdvA, CdvB and CdvC proteins polymerize between segregating nucleoids and persist throughout cell division, forming a successively smaller structure during constriction. The chain is Cell division protein B from Sulfolobus acidocaldarius (strain ATCC 33909 / DSM 639 / JCM 8929 / NBRC 15157 / NCIMB 11770).